A 227-amino-acid chain; its full sequence is Cytochrome c oxidase subunit 2 (227 aa).

The Mitochondrial intermembrane segment spans residues 1 to 14 (MAYPFQLGLQDATS). The chain crosses the membrane as a helical span at residues 15–45 (PIMEELLHFHDHTLMIVFLISSLILYIISLM). Over 46–59 (LTTKLTHTSTMDAQ) the chain is Mitochondrial matrix. Residues 60 to 87 (EVETVWTILPAIILILIALPSLRILYMM) form a helical membrane-spanning segment. The Mitochondrial intermembrane segment spans residues 88–227 (DEINNPSLTV…YFETWSALMV (140 aa)). Cu cation is bound by residues histidine 161, cysteine 196, glutamate 198, cysteine 200, histidine 204, and methionine 207. Glutamate 198 provides a ligand contact to Mg(2+). Tyrosine 218 carries the phosphotyrosine modification.

It belongs to the cytochrome c oxidase subunit 2 family. Component of the cytochrome c oxidase (complex IV, CIV), a multisubunit enzyme composed of 14 subunits. The complex is composed of a catalytic core of 3 subunits MT-CO1, MT-CO2 and MT-CO3, encoded in the mitochondrial DNA, and 11 supernumerary subunits COX4I, COX5A, COX5B, COX6A, COX6B, COX6C, COX7A, COX7B, COX7C, COX8 and NDUFA4, which are encoded in the nuclear genome. The complex exists as a monomer or a dimer and forms supercomplexes (SCs) in the inner mitochondrial membrane with NADH-ubiquinone oxidoreductase (complex I, CI) and ubiquinol-cytochrome c oxidoreductase (cytochrome b-c1 complex, complex III, CIII), resulting in different assemblies (supercomplex SCI(1)III(2)IV(1) and megacomplex MCI(2)III(2)IV(2)). Found in a complex with TMEM177, COA6, COX18, COX20, SCO1 and SCO2. Interacts with TMEM177 in a COX20-dependent manner. Interacts with COX20. Interacts with COX16. The cofactor is Cu cation.

The protein localises to the mitochondrion inner membrane. It carries out the reaction 4 Fe(II)-[cytochrome c] + O2 + 8 H(+)(in) = 4 Fe(III)-[cytochrome c] + 2 H2O + 4 H(+)(out). Component of the cytochrome c oxidase, the last enzyme in the mitochondrial electron transport chain which drives oxidative phosphorylation. The respiratory chain contains 3 multisubunit complexes succinate dehydrogenase (complex II, CII), ubiquinol-cytochrome c oxidoreductase (cytochrome b-c1 complex, complex III, CIII) and cytochrome c oxidase (complex IV, CIV), that cooperate to transfer electrons derived from NADH and succinate to molecular oxygen, creating an electrochemical gradient over the inner membrane that drives transmembrane transport and the ATP synthase. Cytochrome c oxidase is the component of the respiratory chain that catalyzes the reduction of oxygen to water. Electrons originating from reduced cytochrome c in the intermembrane space (IMS) are transferred via the dinuclear copper A center (CU(A)) of subunit 2 and heme A of subunit 1 to the active site in subunit 1, a binuclear center (BNC) formed by heme A3 and copper B (CU(B)). The BNC reduces molecular oxygen to 2 water molecules using 4 electrons from cytochrome c in the IMS and 4 protons from the mitochondrial matrix. This Canis simensis (Ethiopian wolf) protein is Cytochrome c oxidase subunit 2 (MT-CO2).